Consider the following 425-residue polypeptide: Serine--tRNA ligase (425 aa).

L-serine is bound at residue 228–230 (TSE). 259 to 261 (RSE) contributes to the ATP binding site. Glu-282 serves as a coordination point for L-serine. 346-349 (EISS) serves as a coordination point for ATP. Ser-384 provides a ligand contact to L-serine.

The protein belongs to the class-II aminoacyl-tRNA synthetase family. Type-1 seryl-tRNA synthetase subfamily. As to quaternary structure, homodimer. The tRNA molecule binds across the dimer.

The protein localises to the cytoplasm. It catalyses the reaction tRNA(Ser) + L-serine + ATP = L-seryl-tRNA(Ser) + AMP + diphosphate + H(+). It carries out the reaction tRNA(Sec) + L-serine + ATP = L-seryl-tRNA(Sec) + AMP + diphosphate + H(+). Its pathway is aminoacyl-tRNA biosynthesis; selenocysteinyl-tRNA(Sec) biosynthesis; L-seryl-tRNA(Sec) from L-serine and tRNA(Sec): step 1/1. Functionally, catalyzes the attachment of serine to tRNA(Ser). Is also able to aminoacylate tRNA(Sec) with serine, to form the misacylated tRNA L-seryl-tRNA(Sec), which will be further converted into selenocysteinyl-tRNA(Sec). The chain is Serine--tRNA ligase from Ehrlichia ruminantium (strain Gardel).